The chain runs to 115 residues: Large ribosomal subunit protein uL22 (115 aa).

It belongs to the universal ribosomal protein uL22 family. Part of the 50S ribosomal subunit.

Its function is as follows. This protein binds specifically to 23S rRNA; its binding is stimulated by other ribosomal proteins, e.g. L4, L17, and L20. It is important during the early stages of 50S assembly. It makes multiple contacts with different domains of the 23S rRNA in the assembled 50S subunit and ribosome. In terms of biological role, the globular domain of the protein is located near the polypeptide exit tunnel on the outside of the subunit, while an extended beta-hairpin is found that lines the wall of the exit tunnel in the center of the 70S ribosome. The polypeptide is Large ribosomal subunit protein uL22 (rplV) (Wolbachia pipientis wMel).